The following is a 340-amino-acid chain: 4-dimethylallyltryptophan N-methyltransferase ifgB (340 aa).

This sequence belongs to the methyltransferase superfamily. As to quaternary structure, homodimer.

The enzyme catalyses 4-(3-methylbut-2-enyl)-L-tryptophan + S-adenosyl-L-methionine = 4-(3-methylbut-2-enyl)-L-abrine + S-adenosyl-L-homocysteine + H(+). The protein operates within alkaloid biosynthesis; ergot alkaloid biosynthesis. 4-dimethylallyltryptophan N-methyltransferase; part of the gene cluster that mediates the biosynthesis of isofumigaclavines, fungal ergot alkaloids. The tryptophan dimethylallyltransferase ifgA catalyzes the first step of ergot alkaloid biosynthesis by condensing dimethylallyl diphosphate (DMAP) and tryptophan to form 4-dimethylallyl-L-tryptophan. The second step is catalyzed by the methyltransferase ifgB that methylates 4-dimethylallyl-L-tryptophan in the presence of S-adenosyl-L-methionine, resulting in the formation of N-methyl-dimethylallyl-L-tryptophan. The catalase ifgD and the FAD-dependent oxidoreductase ifgC then transform N-methyl-dimethylallyl-L-tryptophan to chanoclavine-I which is further oxidized by ifgE in the presence of NAD(+), resulting in the formation of chanoclavine-I aldehyde. The chanoclavine-I aldehyde reductases ifgG and/or fgaOx3 reduce chanoclavine-I aldehyde to dihydrochanoclavine-I aldehyde that spontaneously dehydrates to form 6,8-dimethyl-6,7-didehydroergoline. The festuclavine dehydrogenases ifgF1 and/or ifgF2 then catalyze the reduction of 6,8-dimethyl-6,7-didehydroergoline to form festuclavine. Hydrolysis of festuclavine by a yet undetermined cytochrome P450 monooxygenase (called ifgH) then leads to the formation of isofumigaclavine B which is in turn acetylated by ifgI to isofumigaclavine A. Penicillium roqueforti has interestingly at least two sets of genes for the consumption of chanoclavine-I aldehyde on three different loci, the OYEs ifgG/fgaOx3 and the festuclavine synthase homologs ifgF1/ifgF2. The reason for the duplication of these genes is unclear, probably to ensure the conversion of chanoclavine-I aldehyde by differential gene expression under various environmental conditions. The polypeptide is 4-dimethylallyltryptophan N-methyltransferase ifgB (Penicillium roqueforti (strain FM164)).